The sequence spans 181 residues: Phospholipase A2 inhibitor gamma subunit B (181 aa).

Disulfide bonds link Cys3/Cys27, Cys6/Cys13, Cys20/Cys48, Cys54/Cys75, Cys76/Cys81, Cys101/Cys126, Cys119/Cys146, and Cys152/Cys172.

The protein belongs to the CNF-like-inhibitor family. As to quaternary structure, heterotrimer of 2 subunits A and 1 subunit B. As to expression, expressed by the liver.

The protein localises to the secreted. In terms of biological role, strongly inhibits its own venom PLA2 and all other PLA2s tested including Elapid, Crotalid and Viperid venom PLA2s, as well as honeybee PLA2s. The polypeptide is Phospholipase A2 inhibitor gamma subunit B (Laticauda semifasciata (Black-banded sea krait)).